A 524-amino-acid chain; its full sequence is Bifunctional NAD(P)H-hydrate repair enzyme Nnr (524 aa).

The segment at M1–D219 is NAD(P)H-hydrate epimerase. The YjeF N-terminal domain occupies I9 to E218. The segment at N57–D61 is NADPHX 1; for epimerase activity. The K(+) site is built by N58 and D128. Residues G132–P138 are NADPHX 1; for epimerase activity. (6S)-NADPHX-binding residues include Y143 and D161. K(+) is bound at residue S164. One can recognise a YjeF C-terminal domain in the interval V224–L507. Residues V224–P524 form an ADP-dependent (S)-NAD(P)H-hydrate dehydratase region. Position 330 (G330) interacts with (6S)-NADPHX. Residues H381–R387 are NADPHX 2; for dehydratase activity. ADP contacts are provided by residues K418 to T422 and N438 to G447. D448 lines the (6S)-NADPHX pocket.

The protein in the N-terminal section; belongs to the NnrE/AIBP family. It in the C-terminal section; belongs to the NnrD/CARKD family. It depends on K(+) as a cofactor.

It carries out the reaction (6S)-NADHX + ADP = AMP + phosphate + NADH + H(+). The enzyme catalyses (6S)-NADPHX + ADP = AMP + phosphate + NADPH + H(+). It catalyses the reaction (6R)-NADHX = (6S)-NADHX. The catalysed reaction is (6R)-NADPHX = (6S)-NADPHX. Bifunctional enzyme that catalyzes the epimerization of the S- and R-forms of NAD(P)HX and the dehydration of the S-form of NAD(P)HX at the expense of ADP, which is converted to AMP. This allows the repair of both epimers of NAD(P)HX, a damaged form of NAD(P)H that is a result of enzymatic or heat-dependent hydration. This Thermofilum pendens (strain DSM 2475 / Hrk 5) protein is Bifunctional NAD(P)H-hydrate repair enzyme Nnr (nnr).